The following is a 59-amino-acid chain: Crassipeptide cce9a (59 aa).

Residues 1-30 constitute a propeptide that is removed on maturation; that stretch reads ADNHARVAGPRAVASGRYATEKAFLQMMTR.

Post-translationally, contains 3 disulfide bonds. As to expression, expressed by the venom duct.

It is found in the secreted. In terms of biological role, crassispirid snail peptide that induces sleep-like symptoms in young mice (12 and 14 days) and hyperactivity in older mice (16 days), when intracranially injected. This chain is Crassipeptide cce9a, found in Crassispira cerithina (Sea snail).